Here is a 245-residue protein sequence, read N- to C-terminus: Transmembrane protein 69 (245 aa).

Transmembrane regions (helical) follow at residues 97 to 117, 122 to 142, 159 to 179, 185 to 205, and 216 to 236; these read ALYI…LMVI, IPVL…FLGG, YINL…ILFS, AIVT…FLLP, and IVST…ENIY.

It localises to the membrane. The polypeptide is Transmembrane protein 69 (Tmem69) (Mus musculus (Mouse)).